The sequence spans 82 residues: Putative membrane protein insertion efficiency factor (82 aa).

The disordered stretch occupies residues 63-82 (GGFDPVPLKKDKNSKTTHHH).

Belongs to the UPF0161 family.

The protein resides in the cell membrane. Could be involved in insertion of integral membrane proteins into the membrane. In Staphylococcus epidermidis (strain ATCC 35984 / DSM 28319 / BCRC 17069 / CCUG 31568 / BM 3577 / RP62A), this protein is Putative membrane protein insertion efficiency factor.